We begin with the raw amino-acid sequence, 208 residues long: Ras-related protein M-Ras (208 aa).

GTP-binding residues include Asp-21, Gly-22, Gly-23, Val-24, Gly-25, Lys-26, Ser-27, Ala-28, Phe-38, Val-39, Pro-40, Tyr-42, Pro-44, and Thr-45. Ser-27 contributes to the Mg(2+) binding site. Positions 42–50 (YDPTIEDSY) match the Effector region motif. Mg(2+) is bound by residues Thr-45 and Asp-67. The GTP site is built by Gly-70, Asn-126, Lys-127, Asp-129, Ser-156, Ala-157, and Lys-158. Residue Cys-205 is modified to Cysteine methyl ester. The S-geranylgeranyl cysteine moiety is linked to residue Cys-205. Positions 206–208 (VIL) are cleaved as a propeptide — removed in mature form.

Belongs to the small GTPase superfamily. Ras family. As to quaternary structure, component of the SHOC2-MRAS-PP1c (SMP) holophosphatase complex consisting of SHOC2, GTP-bound M-Ras/MRAS and the catalytic subunit of protein phosphatase 1 (either PPP1CA, PPP1CB or PPP1CC). Interacts (active GTP-bound form) with both SHOC2 and PP1c (all isoforms) to form a tertiary complex; SHOC2 and PP1c preferably bind M-Ras/MRAS, but they also bind K-Ras/KRAS, N-Ras/NRAS and H-Ras/HRAS. Interacts with RGL3. Interacts (active GTP-bound form preferentially) with RGS14. It depends on Mg(2+) as a cofactor. As to expression, expression highly restricted to the brain and heart.

It is found in the cell membrane. It carries out the reaction GTP + H2O = GDP + phosphate + H(+). In terms of biological role, signal transducer in the Ras-MAPK signaling pathway that regulates cell proliferation and survival. Core component of the SHOC2-MRAS-PP1c (SMP) holophosphatase complex that regulates the MAPK pathway activation. The formation of the SMP complex only occurs when MRAS is GTP-bound. MRAS has low intrinsic GTPase activity and may require additional factors for activation. The SMP complex specifically dephosphorylates the inhibitory phosphorylation at 'Ser-259' of RAF1 kinase, 'Ser-365' of BRAF kinase and 'Ser-214' of ARAF kinase, stimulating their kinase activities. This Homo sapiens (Human) protein is Ras-related protein M-Ras (MRAS).